We begin with the raw amino-acid sequence, 37 residues long: Large ribosomal subunit protein bL36 (37 aa).

Belongs to the bacterial ribosomal protein bL36 family.

The polypeptide is Large ribosomal subunit protein bL36 (Micrococcus luteus (strain ATCC 4698 / DSM 20030 / JCM 1464 / CCM 169 / CCUG 5858 / IAM 1056 / NBRC 3333 / NCIMB 9278 / NCTC 2665 / VKM Ac-2230) (Micrococcus lysodeikticus)).